Here is a 372-residue protein sequence, read N- to C-terminus: 4-hydroxy-3-methylbut-2-en-1-yl diphosphate synthase (flavodoxin) (372 aa).

Cys270, Cys273, Cys305, and Glu312 together coordinate [4Fe-4S] cluster.

This sequence belongs to the IspG family. [4Fe-4S] cluster is required as a cofactor.

It carries out the reaction (2E)-4-hydroxy-3-methylbut-2-enyl diphosphate + oxidized [flavodoxin] + H2O + 2 H(+) = 2-C-methyl-D-erythritol 2,4-cyclic diphosphate + reduced [flavodoxin]. It participates in isoprenoid biosynthesis; isopentenyl diphosphate biosynthesis via DXP pathway; isopentenyl diphosphate from 1-deoxy-D-xylulose 5-phosphate: step 5/6. In terms of biological role, converts 2C-methyl-D-erythritol 2,4-cyclodiphosphate (ME-2,4cPP) into 1-hydroxy-2-methyl-2-(E)-butenyl 4-diphosphate. The protein is 4-hydroxy-3-methylbut-2-en-1-yl diphosphate synthase (flavodoxin) of Vibrio campbellii (strain ATCC BAA-1116).